The following is a 183-amino-acid chain: Ribosome maturation factor RimM (183 aa).

A PRC barrel domain is found at 96 to 171 (PDEFYDHELE…VALIDPPEGL (76 aa)).

This sequence belongs to the RimM family. As to quaternary structure, binds ribosomal protein uS19.

It is found in the cytoplasm. An accessory protein needed during the final step in the assembly of 30S ribosomal subunit, possibly for assembly of the head region. Essential for efficient processing of 16S rRNA. May be needed both before and after RbfA during the maturation of 16S rRNA. It has affinity for free ribosomal 30S subunits but not for 70S ribosomes. This Rhodococcus jostii (strain RHA1) protein is Ribosome maturation factor RimM.